The primary structure comprises 180 residues: Oligoribonuclease (180 aa).

Positions 7 to 170 (LIWIDLEMTG…DDIRESIAEL (164 aa)) constitute an Exonuclease domain. The active site involves Y128.

The protein belongs to the oligoribonuclease family.

It localises to the cytoplasm. 3'-to-5' exoribonuclease specific for small oligoribonucleotides. The chain is Oligoribonuclease from Ectopseudomonas mendocina (strain ymp) (Pseudomonas mendocina).